Here is a 784-residue protein sequence, read N- to C-terminus: Cell wall protein Lmo0130 (784 aa).

A signal peptide spans 1–34 (MKVNKFFKKTTHVLLVAGLTIGLTAPFTGTTAQA). The segment at 690–761 (ATTPPDNGNG…NTSLPTTGDT (72 aa)) is disordered. The span at 697–729 (GNGGTDNGNGNGNNGGTDGNGGTNNGNGSGTNG) shows a compositional bias: gly residues. Over residues 730–759 (GTTTTEDPTTTTSNTSTTGTSSNTSLPTTG) the composition is skewed to low complexity. The LPXTG sorting signal motif lies at 755-759 (LPTTG). Pentaglycyl murein peptidoglycan amidated threonine is present on T758. A propeptide spans 759–784 (GDTAGLATVFGVILTTTALYVLRKRS) (removed by sortase A).

It localises to the secreted. The protein localises to the cell wall. The protein is Cell wall protein Lmo0130 of Listeria monocytogenes serovar 1/2a (strain ATCC BAA-679 / EGD-e).